A 557-amino-acid polypeptide reads, in one-letter code: MMSHTETSLGAENTRTHNFITQIIDEDLASGKHKSVHTRFPPEPNGYLHIGHAKSICLNFGLAKEYQGLCNLRFDDTNPVKEDVEYVDSIKADVEWLGFKWEGEPRYASDYFDALYGYAVELIKKGLAYVDELSPDEMREYRGTLTEPGKNSPYRDRTIEENLALFEKMKNGEFAEGKASLRAKIDMASPFMVMREPVIYRIKFSSHHQTGDKWCIYPMYDFTHCISDAIERITHSICTLEFQDNRRLYDWVLENISIERPLPHQYEFSRLNLEGTLTSKRKLLKLVNDEIVDGWNDPRMPTISGLRRRGYTPASLREFCRRIGVTKQDNVVEYSALEACIREDLNENAPRAMAVIDPVRVVIENFESEAVLTAPNHPNRPELGERQLPFTKELYIDRADFREEANKQYKRLVLGKEVRLRNAYVIKAERVEKDANGEITTIFCTYDPETLGKNPADGRKVKGVIHWVSAVNNHPAEFRLYDRLFTVPNPGAEDDIESVLNPNSLVIKQGFVEQSLANAEAEKGYQFEREGYFCADSKDSRPEHLVFNLTVSLKEGF.

The short motif at 42-52 is the 'HIGH' region element; it reads PEPNGYLHIGH. ATP-binding positions include 43–45 and 49–55; these read EPN and HIGHAKS. The L-glutamine site is built by D75 and Y220. Residues T239 and 270–271 each bind ATP; that span reads RL. Positions 277 to 281 match the 'KMSKS' region motif; the sequence is LTSKR.

Belongs to the class-I aminoacyl-tRNA synthetase family. Monomer.

It is found in the cytoplasm. The catalysed reaction is tRNA(Gln) + L-glutamine + ATP = L-glutaminyl-tRNA(Gln) + AMP + diphosphate. The chain is Glutamine--tRNA ligase from Haemophilus influenzae (strain ATCC 51907 / DSM 11121 / KW20 / Rd).